A 116-amino-acid polypeptide reads, in one-letter code: MNLIMTILTITVALSLILATVSFWLPQMNPDAEKLSPYECGFDPLGSARLPFSLRFFLVAILFLLFDLEIALLLPLPWGDQLHNPTGTFFWATTVLILLTLGLIYEWTQGGLEWAE.

3 consecutive transmembrane segments (helical) span residues 3 to 23 (LIMT…TVSF), 56 to 76 (FFLV…LLPL), and 87 to 107 (GTFF…IYEW).

Belongs to the complex I subunit 3 family.

Its subcellular location is the mitochondrion membrane. The catalysed reaction is a ubiquinone + NADH + 5 H(+)(in) = a ubiquinol + NAD(+) + 4 H(+)(out). Functionally, core subunit of the mitochondrial membrane respiratory chain NADH dehydrogenase (Complex I) that is believed to belong to the minimal assembly required for catalysis. Complex I functions in the transfer of electrons from NADH to the respiratory chain. The immediate electron acceptor for the enzyme is believed to be ubiquinone. This chain is NADH-ubiquinone oxidoreductase chain 3 (MT-ND3), found in Cyprinus carpio (Common carp).